Here is a 105-residue protein sequence, read N- to C-terminus: Small ribosomal subunit protein uS17 (105 aa).

This sequence belongs to the universal ribosomal protein uS17 family. In terms of assembly, part of the 30S ribosomal subunit. Contacts protein S12.

One of the primary rRNA binding proteins, it binds directly to 16S rRNA where it helps nucleate assembly of the platform and body of the 30S subunit by bringing together and stabilizing interactions between several different RNA helices. The combined cluster of proteins S8, S12 and S17 appears to hold together the shoulder and platform of the 30S subunit. In Thermus thermophilus (strain ATCC 27634 / DSM 579 / HB8), this protein is Small ribosomal subunit protein uS17.